The following is a 293-amino-acid chain: Ribosomal protein L11 methyltransferase (293 aa).

Thr-145, Gly-166, Asp-188, and Asn-229 together coordinate S-adenosyl-L-methionine.

It belongs to the methyltransferase superfamily. PrmA family.

The protein resides in the cytoplasm. It carries out the reaction L-lysyl-[protein] + 3 S-adenosyl-L-methionine = N(6),N(6),N(6)-trimethyl-L-lysyl-[protein] + 3 S-adenosyl-L-homocysteine + 3 H(+). Methylates ribosomal protein L11. The chain is Ribosomal protein L11 methyltransferase from Idiomarina loihiensis (strain ATCC BAA-735 / DSM 15497 / L2-TR).